Here is a 329-residue protein sequence, read N- to C-terminus: MSSAPHIPVLGREAIDHLAPREGGIYVDATFGAGGYSRAILDVPGTRLIAIDRDRTAIAGGAELVERSAGRLTLVEDRFSHLADVCAAQGVDAVDGVVMDVGVSSMQLDQAGRGFSFRLDGPLDMRMGQAGPTAADVVARASEADLADIIYLLGEERHSRRVARAIVADRQETPFTTTRALADLVGRVVRSKPGDIHPATRTFQALRIFVNEELEELQTALTAAERVLKPGGRLVVVSFHSLEDRIVKNFLAERSKTGGGSRHLPEVAQTAPSFQLLTRRPVVAGEDEVAHNPRARSAKLRAAERTSAPAHKDDQSSSWPRLSDVMRGG.

S-adenosyl-L-methionine is bound by residues 34-36 (GGY), Asp52, Phe79, Asp100, and Gln107. Residues 285-329 (GEDEVAHNPRARSAKLRAAERTSAPAHKDDQSSSWPRLSDVMRGG) form a disordered region.

It belongs to the methyltransferase superfamily. RsmH family.

It localises to the cytoplasm. It catalyses the reaction cytidine(1402) in 16S rRNA + S-adenosyl-L-methionine = N(4)-methylcytidine(1402) in 16S rRNA + S-adenosyl-L-homocysteine + H(+). In terms of biological role, specifically methylates the N4 position of cytidine in position 1402 (C1402) of 16S rRNA. The sequence is that of Ribosomal RNA small subunit methyltransferase H from Bradyrhizobium diazoefficiens (strain JCM 10833 / BCRC 13528 / IAM 13628 / NBRC 14792 / USDA 110).